The following is a 511-amino-acid chain: 2-isopropylmalate synthase (511 aa).

The region spanning 6–269 (IIIFDTTLRD…YTDIKCENIF (264 aa)) is the Pyruvate carboxyltransferase domain. Mn(2+)-binding residues include Asp15, His203, His205, and Asn239. A regulatory domain region spans residues 394–511 (VIEKLSVISG…SLKVEERKMA (118 aa)).

Belongs to the alpha-IPM synthase/homocitrate synthase family. LeuA type 1 subfamily. As to quaternary structure, homodimer. Mn(2+) serves as cofactor.

Its subcellular location is the cytoplasm. The catalysed reaction is 3-methyl-2-oxobutanoate + acetyl-CoA + H2O = (2S)-2-isopropylmalate + CoA + H(+). Its pathway is amino-acid biosynthesis; L-leucine biosynthesis; L-leucine from 3-methyl-2-oxobutanoate: step 1/4. Functionally, catalyzes the condensation of the acetyl group of acetyl-CoA with 3-methyl-2-oxobutanoate (2-ketoisovalerate) to form 3-carboxy-3-hydroxy-4-methylpentanoate (2-isopropylmalate). The sequence is that of 2-isopropylmalate synthase from Campylobacter jejuni subsp. jejuni serotype O:23/36 (strain 81-176).